Reading from the N-terminus, the 273-residue chain is 3-methyl-2-oxobutanoate hydroxymethyltransferase 3 (273 aa).

The Mg(2+) site is built by aspartate 49 and aspartate 88. 3-methyl-2-oxobutanoate contacts are provided by residues 49–50 (DS), aspartate 88, and lysine 118. Position 120 (glutamate 120) interacts with Mg(2+). Catalysis depends on glutamate 187, which acts as the Proton acceptor.

The protein belongs to the PanB family. As to quaternary structure, homodecamer; pentamer of dimers. Mg(2+) serves as cofactor.

Its subcellular location is the cytoplasm. It carries out the reaction 3-methyl-2-oxobutanoate + (6R)-5,10-methylene-5,6,7,8-tetrahydrofolate + H2O = 2-dehydropantoate + (6S)-5,6,7,8-tetrahydrofolate. The protein operates within cofactor biosynthesis; (R)-pantothenate biosynthesis; (R)-pantoate from 3-methyl-2-oxobutanoate: step 1/2. In terms of biological role, catalyzes the reversible reaction in which hydroxymethyl group from 5,10-methylenetetrahydrofolate is transferred onto alpha-ketoisovalerate to form ketopantoate. This is 3-methyl-2-oxobutanoate hydroxymethyltransferase 3 from Bradyrhizobium diazoefficiens (strain JCM 10833 / BCRC 13528 / IAM 13628 / NBRC 14792 / USDA 110).